Consider the following 235-residue polypeptide: MSIHIEAKQGEIADKILLPGDPLRAQYIAETFLEGATCYNRVRGMLGFTGTYKGHRISVQGTGMGVPSISIYVNELIQSYGVQTLIRVGTCGAIQKDVNVRDVILAMSASTDSNMNRLTFRGRDYAPTAHFDLLRTAYEVGVEKGLKLKVGNVFTADMFYNDQPDWETWARYGVLAVEMETAALYTLAAKFGRKALSVLTVSDHILTGEETTAQERQTTFNEMIEVALETAIRVG.

H4 lines the a purine D-ribonucleoside pocket. Phosphate is bound by residues G20, R24, R43, and 87-90 (RVGT). A purine D-ribonucleoside-binding positions include 178–180 (EME) and 202–203 (SD). Catalysis depends on D203, which acts as the Proton donor.

This sequence belongs to the PNP/UDP phosphorylase family. Homohexamer; trimer of homodimers.

The enzyme catalyses a purine D-ribonucleoside + phosphate = a purine nucleobase + alpha-D-ribose 1-phosphate. It carries out the reaction a purine 2'-deoxy-D-ribonucleoside + phosphate = a purine nucleobase + 2-deoxy-alpha-D-ribose 1-phosphate. Its function is as follows. Catalyzes the reversible phosphorolytic breakdown of the N-glycosidic bond in the beta-(deoxy)ribonucleoside molecules, with the formation of the corresponding free purine bases and pentose-1-phosphate. The protein is Purine nucleoside phosphorylase DeoD-type of Geobacillus sp. (strain WCH70).